The sequence spans 335 residues: MIDQKIFEITLNIDDPANFCTNVEAHLLKELENIYVGKCFKNSFIISITGVIQRSPCFIMRTNNSGRGYMHVRFSALVSYLNAFDLIAAVKIIKNDNNIILGESLLTEPVTIVIPSSESQNNVAEVGQIVPVQLANSSVYYIPGRQQASATGSIFIPKHTFSVYHVQEELTQEQALNLTKLVNVIETLLDSRSKKDFKHICFFEKLYYTYPISSDEILDLKIWKGPKGKEVSRLKPCNVLSFLYDALKNKSSSLGFWARPPDLFKSSPLAYQQDNNSFNTTELPIICSAEVMFVTLLKEIINYLQFMNDLCDTFNNEQLIKRHENIWMLIEQRKI.

It belongs to the Asfivirus DNA-directed RNA polymerase RPB7 homolog family. In terms of assembly, part of the viral DNA-directed RNA polymerase that consists of 8 polII-like subunits (RPB1, RPB2, RPB3, RPB5, RPB6, RPB7, RPB9, RPB10), a capping enzyme and a termination factor.

The protein resides in the host cytoplasm. It is found in the virion. Functionally, component of the DNA-directed RNA polymerase (RNAP) that catalyzes the transcription in the cytoplasm of viral DNA into RNA using the four ribonucleoside triphosphates as substrates. In African swine fever virus (isolate Pig/Kenya/KEN-50/1950) (ASFV), this protein is DNA-directed RNA polymerase RPB7 homolog.